A 483-amino-acid polypeptide reads, in one-letter code: Regulatory protein ViaA (483 aa).

It belongs to the ViaA family. As to quaternary structure, homodimer. Interacts with RavA.

Its subcellular location is the cytoplasm. Its function is as follows. Component of the RavA-ViaA chaperone complex, which may act on the membrane to optimize the function of some of the respiratory chains. ViaA stimulates the ATPase activity of RavA. This is Regulatory protein ViaA from Escherichia fergusonii (strain ATCC 35469 / DSM 13698 / CCUG 18766 / IAM 14443 / JCM 21226 / LMG 7866 / NBRC 102419 / NCTC 12128 / CDC 0568-73).